A 69-amino-acid polypeptide reads, in one-letter code: Large ribosomal subunit protein uL29 (69 aa).

This sequence belongs to the universal ribosomal protein uL29 family.

This chain is Large ribosomal subunit protein uL29, found in Polaromonas sp. (strain JS666 / ATCC BAA-500).